A 324-amino-acid chain; its full sequence is MAASSDSRNVQRIGFLLVRNFALMSYASATEPLRAANLLAGRPLYQIVPLAPGGGTVASSSGLSVGCADLESEGESCHTVFVCAGGEPTDWADTSASHTTLRRLSRLGIRIGGISSGAFVLAAAGLLDNRDFTIHWEHAPALKEAFPHLNPRHARFVLDGGIATCGGGVAPLDMMHAMIAERLGTDFARRVSDWYLHAAVAEPAAPQRGSAAERFGTNHPALLAVLEKMETAIERPLDRTAMARLAGVSPRHLDRLFREHRGTGFLDTYREIRLRHARRLLQQSPLSIPEIAYATGFSSPAHFSNAFKRLFSQTPGSLRRRSGS.

In terms of domain architecture, HTH araC/xylS-type spans 223–321 (LAVLEKMETA…SQTPGSLRRR (99 aa)). 2 consecutive DNA-binding regions (H-T-H motif) follow at residues 240–261 (TAMA…REHR) and 288–311 (IPEI…KRLF).

In Rhizobium meliloti (strain 1021) (Ensifer meliloti), this protein is HTH-type transcriptional regulator GlxA (glxA).